The following is a 231-amino-acid chain: Octanoyltransferase (231 aa).

In terms of domain architecture, BPL/LPL catalytic spans 49–227 (PHLPEAVWLL…ALAARFHLAW (179 aa)). Substrate-binding positions include 91-98 (RGGEVTHH), 158-160 (AIG), and 171-173 (GLA). The Acyl-thioester intermediate role is filled by Cys-189.

The protein belongs to the LipB family.

The protein localises to the cytoplasm. It catalyses the reaction octanoyl-[ACP] + L-lysyl-[protein] = N(6)-octanoyl-L-lysyl-[protein] + holo-[ACP] + H(+). It participates in protein modification; protein lipoylation via endogenous pathway; protein N(6)-(lipoyl)lysine from octanoyl-[acyl-carrier-protein]: step 1/2. Its function is as follows. Catalyzes the transfer of endogenously produced octanoic acid from octanoyl-acyl-carrier-protein onto the lipoyl domains of lipoate-dependent enzymes. Lipoyl-ACP can also act as a substrate although octanoyl-ACP is likely to be the physiological substrate. This chain is Octanoyltransferase, found in Parasynechococcus marenigrum (strain WH8102).